A 187-amino-acid polypeptide reads, in one-letter code: Ribosome-recycling factor (187 aa).

This sequence belongs to the RRF family.

Its subcellular location is the cytoplasm. Functionally, responsible for the release of ribosomes from messenger RNA at the termination of protein biosynthesis. May increase the efficiency of translation by recycling ribosomes from one round of translation to another. The polypeptide is Ribosome-recycling factor (Ruegeria sp. (strain TM1040) (Silicibacter sp.)).